The following is a 201-amino-acid chain: Dephospho-CoA kinase (201 aa).

Residues 3 to 201 (ILGLTGGIGS…QIDSRVGCKI (199 aa)) enclose the DPCK domain. 11–16 (GSGKSL) contributes to the ATP binding site.

This sequence belongs to the CoaE family.

It localises to the cytoplasm. It carries out the reaction 3'-dephospho-CoA + ATP = ADP + CoA + H(+). It participates in cofactor biosynthesis; coenzyme A biosynthesis; CoA from (R)-pantothenate: step 5/5. In terms of biological role, catalyzes the phosphorylation of the 3'-hydroxyl group of dephosphocoenzyme A to form coenzyme A. The protein is Dephospho-CoA kinase of Ehrlichia ruminantium (strain Welgevonden).